A 666-amino-acid polypeptide reads, in one-letter code: MQGPRSTGDSSTGINYADGEPICSTNSETTSNNILNPVDVQFPNNTTGSGRPTYASSSSHVVQNHNWWSFGESSSRLGPSDHLNSNGSKTDRQLLSDGYGFEEGQSGMLLPGESFLRGSSSSHMLSHVNLGKDMDIGSGLQTSGVVIRHNNCETSLGSSSQTAEERSSGPGSSLGGLGSSCKRKALEGAPSHSFPGESHGCFFQTENGAWNEGLAQYDASSSLSLSMPSQNSPNVNNQSGLPEPRFGLGGGRAVTASAFPSTRSTETISRPGRRLNPGQPPESVAFSFTQSGSSVRQQQQLPATSPFVDPLDARAIPVTGSSSSGDGQPSMIHLPALTRNIHQFAWSASSSSRANSMPEEGLSPWDAPRINSEQPVFTTPANETRNPVQDQFCWSFTRGNPSTSGDSPFVPRAGSSSGIHGLQPNPTWVTPHNQSRISEVAPWSLFPSIESESATHGASLPLLPTGPSVSSNEAAAPSGSSSRSHRSRQRRSGLLLERQNDHLHLRHLGRSLAADNDGRNRLISEIRQVLSAMRRGENLRFEDYMVFDPLIYQGMAEMHDRHRDMRLDVDNMSYEELLALGERIGDVSTGLSEEVILKVMKQHKHTSSAAGSHQDMEPCCVCQEEYAEGDDLGTLGCGHEFHTACVKQWLMLKNLCPICKTVALST.

Composition is skewed to polar residues over residues 1–14, 23–35, 42–58, and 73–88; these read MQGP…STGI, CSTN…NNIL, FPNN…ASSS, and SSSR…SNGS. 6 disordered regions span residues 1-58, 73-95, 155-179, 221-329, 400-433, and 457-491; these read MQGP…ASSS, SSSR…RQLL, SLGS…GLGS, SSLS…DGQP, NPST…TPHN, and GASL…RQRR. The segment covering 221 to 239 has biased composition (low complexity); it reads SSLSLSMPSQNSPNVNNQS. 3 stretches are compositionally biased toward polar residues: residues 258–268, 286–303, and 414–433; these read AFPSTRSTETI, FSFT…QLPA, and GSSS…TPHN. Residues 619-660 form an RING-type; atypical zinc finger; the sequence is CCVCQEEYAEGDDLGTLGCGHEFHTACVKQWLMLKNLCPICK.

This sequence belongs to the RING-type zinc finger family. As to quaternary structure, interacts with MED25 and UBC11.

The enzyme catalyses S-ubiquitinyl-[E2 ubiquitin-conjugating enzyme]-L-cysteine + [acceptor protein]-L-lysine = [E2 ubiquitin-conjugating enzyme]-L-cysteine + N(6)-ubiquitinyl-[acceptor protein]-L-lysine.. The protein operates within protein modification; protein ubiquitination. Functionally, E3 ubiquitin-protein ligase that functions as a regulator of MED25 stability by targeting MED25 for degradation in a RING-H2-dependent way. Proteasome-dependent degradation of MED25 seems to activate its function as positive regulator of FLOWERING LOCUS T (FT) and is important to induce the expression of FT and consequently to promote flowering. May function downstream of HAL3 and be required for HAL3-regulated plant growth. Activation of MBR2 by HAL3 may lead to the degradation of cell cycle suppressors, resulting in enhancement of cell division and plant growth. This Arabidopsis thaliana (Mouse-ear cress) protein is E3 ubiquitin-protein ligase MBR2 (MBR2).